A 607-amino-acid chain; its full sequence is Elongation factor 4 (607 aa).

One can recognise a tr-type G domain in the interval 11–193 (SKIRNFSIIA…QIVEKVPAPT (183 aa)). Residues 23-28 (DHGKST) and 140-143 (NKID) each bind GTP.

The protein belongs to the TRAFAC class translation factor GTPase superfamily. Classic translation factor GTPase family. LepA subfamily.

It localises to the cell membrane. It catalyses the reaction GTP + H2O = GDP + phosphate + H(+). Its function is as follows. Required for accurate and efficient protein synthesis under certain stress conditions. May act as a fidelity factor of the translation reaction, by catalyzing a one-codon backward translocation of tRNAs on improperly translocated ribosomes. Back-translocation proceeds from a post-translocation (POST) complex to a pre-translocation (PRE) complex, thus giving elongation factor G a second chance to translocate the tRNAs correctly. Binds to ribosomes in a GTP-dependent manner. This chain is Elongation factor 4, found in Bacillus cereus (strain AH820).